The primary structure comprises 85 residues: Small ribosomal subunit protein bS16 (85 aa).

It belongs to the bacterial ribosomal protein bS16 family.

The sequence is that of Small ribosomal subunit protein bS16 from Clostridium novyi (strain NT).